The following is a 170-amino-acid chain: Protein ripply3 (170 aa).

The WRPW motif motif lies at 40–43 (WRPW). The tract at residues 79–114 (HPVRLYMPKSKTSEYLQHMGKKVLANFPVQATIHFY) is ripply homology domain. Residues 143–152 (VNSSRGSGDN) are compositionally biased toward polar residues. The interval 143–170 (VNSSRGSGDNYSVPGGPKRNISSHTGSA) is disordered.

Belongs to the ripply family. In terms of assembly, interacts with tbx1 and tle4/grg4.

It localises to the nucleus. Acts as a transcriptional corepressor. Negative regulator of the transcriptional activity of tbx1 that plays a key role in pharyngeal development. Plays a role in the formation of the anteroposterior (AP) axis during embryonic development; required to establish the posterolateral border of the pre-placodal ectoderm (PPE) acting downstream of the retinoic acid receptor (RAR) signaling. The sequence is that of Protein ripply3 from Xenopus tropicalis (Western clawed frog).